The chain runs to 964 residues: Myocardin-related transcription factor A (964 aa).

Positions methionine 1–aspartate 291 are mediates interaction with SCAI and ACTB. The RPEL 1 repeat unit spans residues serine 15–lysine 40. A Phosphoserine modification is found at serine 41. Residues serine 41–glutamate 58 are intervening spacer sequence 1. One copy of the RPEL 2 repeat lies at aspartate 59 to serine 84. The Bipartite Nuclear localization signal signature appears at lysine 62–arginine 100. An intervening spacer sequence 2 region spans residues alanine 85–alanine 102. The stretch at aspartate 103–serine 128 is one RPEL 3 repeat. 2 disordered regions span residues alanine 145–serine 292 and leucine 328–serine 371. Serine 159, serine 174, and serine 191 each carry phosphoserine. Residues serine 186 to serine 197 are compositionally biased toward polar residues. Residues proline 215–proline 224 show a composition bias toward pro residues. Basic and acidic residues predominate over residues alanine 251–proline 266. Positions glycine 340–glycine 365 are enriched in low complexity. Serine 349 and serine 351 each carry phosphoserine. Phosphothreonine is present on threonine 352. Residues serine 355 and serine 358 each carry the phosphoserine modification. A Phosphothreonine modification is found at threonine 360. Serine 371 bears the Phosphoserine mark. In terms of domain architecture, SAP spans leucine 385–glutamine 419. Phosphoserine is present on residues serine 423 and serine 484. The disordered stretch occupies residues serine 484–serine 508. A Phosphothreonine modification is found at threonine 485. Serine 487 is modified (phosphoserine). Residue threonine 488 is modified to Phosphothreonine. Serine 492 carries the phosphoserine modification. Position 494 is a phosphothreonine (threonine 494). Residue serine 496 is modified to Phosphoserine. The span at glutamate 497 to serine 508 shows a compositional bias: polar residues. Serine 520, serine 530, serine 544, and serine 548 each carry phosphoserine. Residues arginine 552–glutamine 600 adopt a coiled-coil conformation. 7 positions are modified to phosphoserine: serine 605, serine 606, serine 651, serine 687, serine 718, serine 724, and serine 728. Residues threonine 638–leucine 673 form a disordered region. 2 disordered regions span residues asparagine 706–glutamine 779 and alanine 796–aspartate 849. The span at proline 715–glycine 727 shows a compositional bias: low complexity. Over residues threonine 764–glutamine 779 the composition is skewed to polar residues. Over residues alanine 796–serine 810 the composition is skewed to basic and acidic residues. A Phosphoserine modification is found at serine 810. Threonine 822 is modified (phosphothreonine). A phosphoserine mark is found at serine 826 and serine 840. Position 842 is a phosphothreonine (threonine 842). Position 892 is a phosphoserine (serine 892).

Interacts with SRF, forming the SRF-MRTFA nuclear complex which binds the 5'-CArG-3' consensus motif (CArG box) on DNA via SRF. Interacts (via RPEL repeats) with globular actin (G-actin), thereby regulating its subcellular location and activity of the complex formed with SRF. Either forms a trivalent (by binding three G-actin monomers) or pentavalent (by binding five G-actin monomers) complex with G-actin. Forms a nuclear ternary complex with SCAI and SRF, leading to suppress MRTFA-induced SRF transcriptional activity. Interacts with beta-actin (ACTB); interaction with ACTB prevents interaction with SCAI. Interacts with MRTFB. Phosphorylation at Ser-41 by Erk inhibits binding of globular actin (G-actin), unmasking the nuclear localization signal (NLS) and promoting nuclear import. As to expression, expressed in heart, brain, spleen, lung, liver, muscle, kidney and testis.

It is found in the cytoplasm. Its subcellular location is the nucleus. Its function is as follows. Transcription coactivator that associates with the serum response factor (SRF) transcription factor to control expression of genes regulating the cytoskeleton during development, morphogenesis and cell migration. The SRF-MRTFA complex activity responds to Rho GTPase-induced changes in cellular globular actin (G-actin) concentration, thereby coupling cytoskeletal gene expression to cytoskeletal dynamics. MRTFA binds G-actin via its RPEL repeats, regulating activity of the MRTFA-SRF complex. Activity is also regulated by filamentous actin (F-actin) in the nucleus. This Mus musculus (Mouse) protein is Myocardin-related transcription factor A (Mrtfa).